The chain runs to 994 residues: MTDHAENRCGLEGPRPFSSRHVGSVEDDLRYIAETIGVTSPEQIIRDAIPASVLDSNEGDSSVRTPSFPPAADETTARAELVEIASGNRVTRALIGRGYYGTLTPPVIRRNILENPSWYTAYTPYQPEISQGRLEMLTIYQQLITDLTGLALANSSLLDEATAASEGMLLARRAARKVKSNRFLVHTHLFDQVRDVVLGHAEATGIEVVETDLRDPQSWRPEVEAGCFGVLAPYPDSTGALWNPSEVFDAVHKVGGITIAECDLLSLTLLAPPGELGADVAVGSSQRFGVPMGNGGPHAAYMSVRSGLERQIPGRLVGVSTDADGNPAYRLALQTREQHIRRDKATSNICTAQVLLAVVAAAYAVWHGPTGLTRIARQVTDRAHQLASALRAAGLDVADQQFFDTIRIRTKGGAKELWNRAREGGYTLDLVDGDILQISVDETVTDDELRELTQLLGGSTDEIRGPADRAWPEDLRRTSSFMTHPVFSSYHTETTMMRYLKRLADHDYGLDRGMIPLGSCTMKLNAAAEMEAMTWPAFSQMHPFAPVEDQAGSLRLIRDLEIWLAELTGYDTVSLQPNAGSQGEYTGLAAIRSYHVSRGDTERNVCLVPASAHGTNAASAASAGLRVVVVKSNDDGTIDRDDLAAKIAANEGRIAAIMITYPSTHGVYEDGVRQVCDMVHEAGGQVYIDGANFNALVGWGQFARIGGDVSHLNLHKTFAIPHGGGGPGVGPVAAKAHLAPFLPGHPLNPRNEHPLNDGGTVTHDGHAVSAAPFGSVSVLPISWAYLRLMGLKGLQFATEVAVLNANYIAHRLHDKIPILYTGQNGYVAHECILDLRPLTTETGITVDDVAKRLIDYGFHAPTMSFPVAGTLMVEPTESEDLAELDRFCDAMLAIVEEARMVQSGHWPANDNPLINAPHPAARLVADEWNHPYSRELGCYPGMRLGIQRDQERGLDVNTVTRIQAKYWPPVGRVDNTYGDRHLVCSCPPPEAFED.

The tract at residues 1-20 (MTDHAENRCGLEGPRPFSSR) is disordered. Position 716 is an N6-(pyridoxal phosphate)lysine (K716).

It belongs to the GcvP family. The glycine cleavage system is composed of four proteins: P, T, L and H. Pyridoxal 5'-phosphate is required as a cofactor.

It carries out the reaction N(6)-[(R)-lipoyl]-L-lysyl-[glycine-cleavage complex H protein] + glycine + H(+) = N(6)-[(R)-S(8)-aminomethyldihydrolipoyl]-L-lysyl-[glycine-cleavage complex H protein] + CO2. The glycine cleavage system catalyzes the degradation of glycine. The P protein binds the alpha-amino group of glycine through its pyridoxal phosphate cofactor; CO(2) is released and the remaining methylamine moiety is then transferred to the lipoamide cofactor of the H protein. This is Glycine dehydrogenase (decarboxylating) from Cutibacterium acnes (strain DSM 16379 / KPA171202) (Propionibacterium acnes).